The following is a 311-amino-acid chain: MPINIPKNLPAGEHLREEKIFVMEEDRARTQQIRPLNILILNLMPEKEKTELQLLRLLGNTPLQVNITFLNTATHESKNVSKSHLQLFYTTFNQIRHRRYDGMIITGAPVEKMPFEEVNYWQEIAEIMDWSKKNVTSVLHICWGAQAALYHHYGIGKIELSAKCSGVYSHVITDLTVDLVRGFSDLFTAPHSRYTSVSIDEVRNHPDLRLLSYSEDAGVFIVQSKDNKNIMITGHLEYDATTLADEYSRDVAKGIDINVPVNYFPNDDPEKEPMNTWRAHTHLLFSNWLNYYVYQETPYEWDFVDEIEYHI.

The Acyl-thioester intermediate role is filled by Cys142. Substrate is bound by residues Lys163 and Ser192. His235 acts as the Proton acceptor in catalysis. Residue Glu237 is part of the active site. Arg249 is a substrate binding site.

It belongs to the MetA family.

It localises to the cytoplasm. The catalysed reaction is L-homoserine + acetyl-CoA = O-acetyl-L-homoserine + CoA. It participates in amino-acid biosynthesis; L-methionine biosynthesis via de novo pathway; O-acetyl-L-homoserine from L-homoserine: step 1/1. Transfers an acetyl group from acetyl-CoA to L-homoserine, forming acetyl-L-homoserine. The chain is Homoserine O-acetyltransferase from Lysinibacillus sphaericus (strain C3-41).